The following is a 156-amino-acid chain: Small ribosomal subunit protein uS7 (156 aa).

It belongs to the universal ribosomal protein uS7 family. Part of the 30S ribosomal subunit. Contacts proteins S9 and S11.

In terms of biological role, one of the primary rRNA binding proteins, it binds directly to 16S rRNA where it nucleates assembly of the head domain of the 30S subunit. Is located at the subunit interface close to the decoding center, probably blocks exit of the E-site tRNA. The polypeptide is Small ribosomal subunit protein uS7 (Methylibium petroleiphilum (strain ATCC BAA-1232 / LMG 22953 / PM1)).